Consider the following 300-residue polypeptide: Tyrosine recombinase XerC (300 aa).

The 87-residue stretch at 2-88 folds into the Core-binding (CB) domain; the sequence is TQEGQLEKRF…SLRSFYTFLL (87 aa). In terms of domain architecture, Tyr recombinase spans 109 to 294; it reads RLPKFFYSEE…TKEHLKSTYM (186 aa). Residues Arg150, Lys174, His246, Arg249, and His272 contribute to the active site. The O-(3'-phospho-DNA)-tyrosine intermediate role is filled by Tyr281.

This sequence belongs to the 'phage' integrase family. XerC subfamily. Forms a cyclic heterotetrameric complex composed of two molecules of XerC and two molecules of XerD.

The protein localises to the cytoplasm. Functionally, site-specific tyrosine recombinase, which acts by catalyzing the cutting and rejoining of the recombining DNA molecules. The XerC-XerD complex is essential to convert dimers of the bacterial chromosome into monomers to permit their segregation at cell division. It also contributes to the segregational stability of plasmids. The chain is Tyrosine recombinase XerC from Listeria innocua serovar 6a (strain ATCC BAA-680 / CLIP 11262).